Here is a 301-residue protein sequence, read N- to C-terminus: Hydroxyquinol 1,2-dioxygenase (301 aa).

Residues Tyr-169, Tyr-202, His-226, and His-228 each contribute to the Fe cation site.

This sequence belongs to the intradiol ring-cleavage dioxygenase family. Fe(3+) serves as cofactor.

The enzyme catalyses benzene-1,2,4-triol + O2 = maleylacetate + 2 H(+). Its pathway is aromatic compound metabolism. Functionally, involved in resorcinol degradation. Catalyzes the conversion of hydroxyquinol to malelylacetate. Also shows weak activity with catechol, 3-methylcatechol and 4-methylcatechol, but cannot use 4-chlorocatechol, 4-nitrocatechol or protocatechuate. In Corynebacterium glutamicum (strain ATCC 13032 / DSM 20300 / JCM 1318 / BCRC 11384 / CCUG 27702 / LMG 3730 / NBRC 12168 / NCIMB 10025 / NRRL B-2784 / 534), this protein is Hydroxyquinol 1,2-dioxygenase.